Here is a 307-residue protein sequence, read N- to C-terminus: uncharacterized protein (307 aa).

This is an uncharacterized protein from Rickettsia conorii (strain ATCC VR-613 / Malish 7).